The primary structure comprises 118 residues: MKLPIPYQMAVSTVHLKLTDQSAKKDRYGRTVPTWEGDITKCVVNMQTTYSGTNNDRQIVANGLIVMYAGYSNPIPTLTKENLGSKLTYQGLDYTVTSLNRFDQPGTEDLYCYELEVI.

The protein belongs to the Lactobacillus delbrueckii bacteriophages ORF5 protein family.

This is an uncharacterized protein from Lactobacillus delbrueckii (Lactococcus delbrueckii bacteriophage LL-H).